We begin with the raw amino-acid sequence, 712 residues long: Ribosomal RNA large subunit methyltransferase K/L (712 aa).

One can recognise a THUMP domain in the interval 46–157 (GAYQALLHSR…REKLIVSLDL (112 aa)).

Belongs to the methyltransferase superfamily. RlmKL family.

The protein resides in the cytoplasm. It carries out the reaction guanosine(2445) in 23S rRNA + S-adenosyl-L-methionine = N(2)-methylguanosine(2445) in 23S rRNA + S-adenosyl-L-homocysteine + H(+). The enzyme catalyses guanosine(2069) in 23S rRNA + S-adenosyl-L-methionine = N(2)-methylguanosine(2069) in 23S rRNA + S-adenosyl-L-homocysteine + H(+). Specifically methylates the guanine in position 2445 (m2G2445) and the guanine in position 2069 (m7G2069) of 23S rRNA. This Haemophilus ducreyi (strain 35000HP / ATCC 700724) protein is Ribosomal RNA large subunit methyltransferase K/L.